The sequence spans 342 residues: Fatty acid desaturase 6 (342 aa).

2 helical membrane passes run 39-59 and 63-83; these read GVDC…FLCL and SPLV…TLTV. The short motif at 87–91 is the Histidine box-1 element; it reads HLATH. Residues 124–128 carry the Histidine box-2 motif; the sequence is HVKMH. 2 helical membrane passes run 151 to 171 and 185 to 205; these read YVYM…VAVE and LGLI…VSGF. The short motif at 277-281 is the Histidine box-3 element; it reads HVEHH.

The protein belongs to the fatty acid desaturase type 1 family.

The protein resides in the membrane. It functions in the pathway lipid metabolism; fatty acid metabolism. The protein is Fatty acid desaturase 6 (FADS6) of Bos taurus (Bovine).